The chain runs to 361 residues: Chorismate synthase (361 aa).

Residues Arg-48 and Arg-54 each coordinate NADP(+). FMN-binding positions include 125–127 (RSS), 238–239 (NA), Gly-278, 293–297 (KPTSS), and Arg-319.

It belongs to the chorismate synthase family. Homotetramer. FMNH2 is required as a cofactor.

The enzyme catalyses 5-O-(1-carboxyvinyl)-3-phosphoshikimate = chorismate + phosphate. It functions in the pathway metabolic intermediate biosynthesis; chorismate biosynthesis; chorismate from D-erythrose 4-phosphate and phosphoenolpyruvate: step 7/7. Catalyzes the anti-1,4-elimination of the C-3 phosphate and the C-6 proR hydrogen from 5-enolpyruvylshikimate-3-phosphate (EPSP) to yield chorismate, which is the branch point compound that serves as the starting substrate for the three terminal pathways of aromatic amino acid biosynthesis. This reaction introduces a second double bond into the aromatic ring system. In Shigella flexneri serotype 5b (strain 8401), this protein is Chorismate synthase.